The following is a 331-amino-acid chain: Protein RecA (331 aa).

An ATP-binding site is contributed by 66 to 73 (GPESSGKT).

Belongs to the RecA family.

Its subcellular location is the cytoplasm. In terms of biological role, can catalyze the hydrolysis of ATP in the presence of single-stranded DNA, the ATP-dependent uptake of single-stranded DNA by duplex DNA, and the ATP-dependent hybridization of homologous single-stranded DNAs. It interacts with LexA causing its activation and leading to its autocatalytic cleavage. This is Protein RecA from Acholeplasma laidlawii (strain PG-8A).